The primary structure comprises 467 residues: Cytochrome P450 76A1 (467 aa).

A heme-binding site is contributed by Cys410.

The protein belongs to the cytochrome P450 family. It depends on heme as a cofactor.

The protein is Cytochrome P450 76A1 (CYP76A1) of Solanum melongena (Eggplant).